The sequence spans 406 residues: Elongation factor Tu, chloroplastic (406 aa).

A tr-type G domain is found at 8-210; that stretch reads KTHINIATIG…LLDSYIPKPK (203 aa). GTP contacts are provided by residues 17-24, 77-81, and 132-135; these read GHFNHGKT, DCPGH, and NKED. Threonine 24 is a Mg(2+) binding site.

This sequence belongs to the TRAFAC class translation factor GTPase superfamily. Classic translation factor GTPase family. EF-Tu/EF-1A subfamily. In terms of assembly, monomer.

The protein localises to the plastid. The protein resides in the chloroplast. It carries out the reaction GTP + H2O = GDP + phosphate + H(+). GTP hydrolase that promotes the GTP-dependent binding of aminoacyl-tRNA to the A-site of ribosomes during protein biosynthesis. The sequence is that of Elongation factor Tu, chloroplastic (tufA) from Chaetosphaeridium globosum (Charophycean green alga).